The chain runs to 419 residues: Elongation factor Tu, chloroplastic (419 aa).

A tr-type G domain is found at 10 to 214 (KPHVNIGTIG…TVDEHIPTPK (205 aa)). The segment at 19 to 26 (GHVDHGKT) is G1. 19–26 (GHVDHGKT) contacts GTP. T26 serves as a coordination point for Mg(2+). Residues 60–64 (GITIN) form a G2 region. The G3 stretch occupies residues 81–84 (DCPG). GTP contacts are provided by residues 81–85 (DCPGH) and 136–139 (NKAD). Residues 136–139 (NKAD) are G4. Residues 174-176 (SAL) are G5.

It belongs to the TRAFAC class translation factor GTPase superfamily. Classic translation factor GTPase family. EF-Tu/EF-1A subfamily.

Its subcellular location is the plastid. The protein localises to the chloroplast. It catalyses the reaction GTP + H2O = GDP + phosphate + H(+). In terms of biological role, GTP hydrolase that promotes the GTP-dependent binding of aminoacyl-tRNA to the A-site of ribosomes during protein biosynthesis. This Stigeoclonium helveticum (Green alga) protein is Elongation factor Tu, chloroplastic (tufA).